The following is a 221-amino-acid chain: MNLYGIFGAGSYGRETIPILNQQIKQECGSDYALVFVDDVLAGKKVNGFEVLSTNCFLKAPYLKKYFNVAIANDKIRQRVSESILLHGVEPITIKHPNSVVYDHTMIGSGAIISPFVTISTNTHIGRFFHANIYSYVAHDCQIGDYVTFAPGAKCNGYVVIEDNAYIGSGAVIKQGVPNRPLIIGAGAIIGMGAVVTKSVPAGITVCGNPAREMKRSPTSI.

The active-site Proton acceptor is the H139.

The protein belongs to the transferase hexapeptide repeat family. As to quaternary structure, homotrimer.

It carries out the reaction GDP-alpha-D-perosamine + acetyl-CoA = GDP-N-acetyl-alpha-D-perosamine + CoA + H(+). Its pathway is bacterial outer membrane biogenesis; LPS O-antigen biosynthesis. In terms of biological role, catalyzes the transfer of an acetyl residue from acetyl-CoA onto GDP-perosamine to form GDP-N-acetyl-perosamine. This chain is GDP-perosamine N-acetyltransferase, found in Escherichia coli O157:H7.